We begin with the raw amino-acid sequence, 212 residues long: Regulatory protein RecX (212 aa).

It belongs to the RecX family.

It is found in the cytoplasm. Its function is as follows. Modulates RecA activity. The chain is Regulatory protein RecX from Clostridium perfringens (strain SM101 / Type A).